Here is a 955-residue protein sequence, read N- to C-terminus: Glutamyl aminopeptidase (955 aa).

The Cytoplasmic portion of the chain corresponds to 1 to 17 (MDIEDKTSKMHCMKGKH). Residues 18–38 (VVIICGVVIAVGLILGLGLGL) form a helical; Signal-anchor for type II membrane protein membrane-spanning segment. Topologically, residues 39–955 (GLDTKACNPP…LENSEHSNFA (917 aa)) are extracellular. Residues asparagine 118 and asparagine 192 are each glycosylated (N-linked (GlcNAc...) asparagine). Glutamate 218 is a substrate binding site. 2 N-linked (GlcNAc...) asparagine glycosylation sites follow: asparagine 319 and asparagine 335. 352-356 (GAMEN) contributes to the substrate binding site. Histidine 388 is a binding site for Zn(2+). Glutamate 389 functions as the Proton acceptor in the catalytic mechanism. Residues histidine 392 and glutamate 411 each coordinate Zn(2+). N-linked (GlcNAc...) asparagine glycans are attached at residues asparagine 458, asparagine 547, asparagine 584, asparagine 592, asparagine 674, asparagine 759, asparagine 823, and asparagine 836. Residue arginine 882 coordinates substrate.

The protein belongs to the peptidase M1 family. In terms of assembly, homodimer; disulfide-linked. The cofactor is Zn(2+). Post-translationally, N-glycosylated. Glycosylation counts for an increased mass of about 32% of the protein mass (about 48 kDa).

The protein localises to the cell membrane. The enzyme catalyses Release of N-terminal glutamate (and to a lesser extent aspartate) from a peptide.. Substrate specificity is modulated by calcium which enhances the enzymatic activity for cleavage of acidic residues while reducing its activity with neutral and basic residues. Hydrolytic activity is inhibited by the aminopeptidase inhibitor (Leu and acidic inhibitor) amastatin, but not by bestatin (aminopeptidase inhibitor Leu inhibitor), leupeptin, pepstatin A and PMSF. Its hydrolytic activity is also strongly reduced by zinc ions, with a complete inhibition at 0.5 mM, and moderately inhibited by cobalt and copper ions. Its function is as follows. Venom protein that cleaves N-terminal acidic residues from peptides with high potency in presence of calcium. It may have several roles in venom including alteration of blood pressure by cleaving circulating angiotensin-2, general degradation of host tissue, increase of permeability to other venom components, and/or processing of other toxins in the venom. The polypeptide is Glutamyl aminopeptidase (Bitis rhinoceros (West African gaboon viper)).